The sequence spans 1059 residues: Microtubule-associated protein 1S (1059 aa).

Residues Met-1–Ser-797 form a necessary for the microtubule-organizing center localization region. Residues Ser-321 and Ser-472 each carry the phosphoserine modification. Disordered regions lie at residues Pro-461–His-733 and Val-751–Pro-942. 2 stretches are compositionally biased toward basic and acidic residues: residues Gly-466–Gly-486 and Pro-494–Lys-530. Positions Ser-547 to Gln-557 are enriched in polar residues. The residue at position 582 (Ser-582) is a Phosphoserine. The span at Ala-591–Ser-603 shows a compositional bias: low complexity. Thr-638 bears the Phosphothreonine mark. Ser-640 carries the phosphoserine modification. Positions Glu-642–Glu-652 are enriched in basic and acidic residues. Ser-655 and Ser-657 each carry phosphoserine. The interval Pro-666 to Phe-1059 is necessary for interaction with RASSF1 isoform A and isoform C. Low complexity predominate over residues Pro-670–Pro-680. The segment at Glu-714–Glu-966 is necessary for association with microtubules. Ser-731 and Ser-759 each carry phosphoserine. Residues Ser-759–Arg-769 are compositionally biased toward low complexity. Positions Pro-783–Asp-796 are enriched in polar residues. Ser-809 is modified (phosphoserine). Positions Pro-825 to Asp-836 are enriched in pro residues. 2 stretches are compositionally biased toward low complexity: residues Ala-873–Lys-887 and Thr-923–Pro-936. The segment at Ala-960–Phe-1059 is necessary for association with actin. The segment at Phe-967–Ala-991 is necessary for the mitochondrial aggregation and genome destruction.

The protein belongs to the MAP1 family. In terms of assembly, heterodimer of a heavy and a light chain. Interacts with microtubules and actin. Both MAP1S heavy and light chains interact with microtubules. MAP1S light chain interacts with actin. Interacts (via C-terminus) with GAN (via Kelch domains). Interacts with ESR1, LRPPRC, RASSF1 isoform A and isoform C, microtubules and VCY2. Interacts with WDR47 (via N-terminus of light chain). In terms of tissue distribution, expressed in neurons (at protein level). Expressed in spermatocytes, spermatids and spermatozoa. Expressed in the cerebral cortex. Highly expressed in testis. Moderately expressed in the brain, colon, heart, kidney, liver, lung, placenta, small intestine, spleen and stomach. Weakly expressed in muscle.

It is found in the nucleus. Its subcellular location is the cytoplasm. The protein localises to the cytosol. The protein resides in the cytoskeleton. It localises to the spindle. Functionally, microtubule-associated protein that mediates aggregation of mitochondria resulting in cell death and genomic destruction (MAGD). Plays a role in anchoring the microtubule organizing center to the centrosomes. Binds to DNA. Plays a role in apoptosis. Involved in the formation of microtubule bundles. The polypeptide is Microtubule-associated protein 1S (MAP1S) (Homo sapiens (Human)).